The sequence spans 398 residues: Maltoporin (398 aa).

An N-terminal signal peptide occupies residues 1-30; sequence MTDKNNKRLFKVAPLATAIAASLFTVNASA.

The protein belongs to the porin LamB (TC 1.B.3) family. As to quaternary structure, homotrimer formed of three 18-stranded antiparallel beta-barrels, containing three independent channels.

It is found in the cell outer membrane. It catalyses the reaction beta-maltose(in) = beta-maltose(out). Functionally, involved in the transport of maltose and maltodextrins. This chain is Maltoporin, found in Hahella chejuensis (strain KCTC 2396).